The following is a 243-amino-acid chain: MDPAAFVQALADHGIVLNDHQQDQFAAYYQYLISENEKMNLTGITAEGDVYLKHFYDSLTLALVLPELQTQVMSVCDVGAGAGFPSIPLKIAFPQLKITIVDSLQKRIGFLERLTARLELTDVQLFHDRAEAFGAKKSPHRASFDLVTARAVAALDVLAELCLPLVKPQGRFVAMKAAATPAELIAAKSAIGLLGGKLAQDAALTLPETGDPRHLLVIDKVKPTPNKYPRKPGIPNKQPLGGA.

S-adenosyl-L-methionine contacts are provided by residues G79, F84, 130–131 (AE), and R150. Positions 222-243 (KPTPNKYPRKPGIPNKQPLGGA) are disordered.

The protein belongs to the methyltransferase superfamily. RNA methyltransferase RsmG family.

The protein resides in the cytoplasm. Specifically methylates the N7 position of a guanine in 16S rRNA. This chain is Ribosomal RNA small subunit methyltransferase G, found in Lacticaseibacillus paracasei (strain ATCC 334 / BCRC 17002 / CCUG 31169 / CIP 107868 / KCTC 3260 / NRRL B-441) (Lactobacillus paracasei).